The sequence spans 87 residues: FXYD domain-containing ion transport regulator 3 (87 aa).

Residues 1 to 20 (MQKVTLGLLVFLAGFPVLDA) form the signal peptide. At 21–38 (NDLEDKNSPFYYDWHSLQ) the chain is on the extracellular side. Residues 39–59 (VGGLICAGVLCAMGIIIVMSA) form a helical membrane-spanning segment. At 60–87 (KCKCKFGQKSGHHPGETPPLITPGSAQS) the chain is on the cytoplasmic side. Residues 66–87 (GQKSGHHPGETPPLITPGSAQS) are disordered.

Belongs to the FXYD family. As to quaternary structure, regulatory subunit of the sodium/potassium-transporting ATPase which is composed of a catalytic alpha subunit, a non-catalytic beta subunit and an additional regulatory subunit. Interacts with catalytic alpha subunit ATP1A1. Also interacts with non-catalytic beta subunit ATP1B1. Interacts with the ATP1A1-ATP1B1, ATP1A2-ATP1B1 and ATP1A3-ATP1B1 NKA isozymes. Post-translationally, glutathionylated. As to expression, isoform 1: Expressed mainly in differentiated cells (at protein level). Isoform 2: Expressed mainly in undifferentiated cells (at protein level).

The protein localises to the cell membrane. Its function is as follows. Associates with and regulates the activity of the sodium/potassium-transporting ATPase (NKA) which transports Na(+) out of the cell and K(+) into the cell. Reduces glutathionylation of the NKA beta-1 subunit ATP1B1, thus reversing glutathionylation-mediated inhibition of ATP1B1. Induces a hyperpolarization-activated chloride current when expressed in Xenopus oocytes. Decreases the apparent K+ and Na+ affinity of the sodium/potassium-transporting ATPase over a large range of membrane potentials. Functionally, decreases the apparent K+ affinity of the sodium/potassium-transporting ATPase only at slightly negative and positive membrane potentials and increases the apparent Na+ affinity over a large range of membrane potentials. In Homo sapiens (Human), this protein is FXYD domain-containing ion transport regulator 3 (FXYD3).